The following is a 1614-amino-acid chain: Low-density lipoprotein receptor-related protein 5 (1614 aa).

Residues 1-30 (METAPTRAPPPPPPPLLLLVLYCSLVPAAA) form the signal peptide. The tract at residues 31 to 287 (SPLLLFANRR…YSPMDIQVLS (257 aa)) is beta-propeller 1. The Extracellular segment spans residues 31–1383 (SPLLLFANRR…PPSDDIPAHS (1353 aa)). 5 LDL-receptor class B repeats span residues 74 to 118 (GAVY…DWVG), 119 to 161 (KKLY…DPAH), 162 to 205 (GYMY…DLEE), 206 to 246 (QKLY…TLSG), and 247 to 289 (DTLY…LSQE). 2 N-linked (GlcNAc...) asparagine glycosylation sites follow: asparagine 92 and asparagine 137. The region spanning 294–336 (FHTPCEEDNGGCSHLCLLSPREPFYSCACPTGVQLQDNGKTCK) is the EGF-like 1 domain. Intrachain disulfides connect cysteine 298–cysteine 309, cysteine 305–cysteine 320, and cysteine 322–cysteine 335. The interval 340–601 (EEVLLLARRT…AVNVAKVVGT (262 aa)) is beta-propeller 2. 5 LDL-receptor class B repeats span residues 384-426 (GYVY…DWVA), 427-469 (RNLY…HPVM), 470-513 (GLMY…DLQE), 514-556 (GKLY…LGDF), and 557-599 (IYWT…AKVV). N-linked (GlcNAc...) asparagine glycans are attached at residues asparagine 445 and asparagine 498. Residues 600–640 (GTNPCADGNGGCSHLCFFTPRATKCGCPIGLELLSDMKTCI) form the EGF-like 2 domain. 3 disulfides stabilise this stretch: cysteine 604–cysteine 615, cysteine 611–cysteine 624, and cysteine 626–cysteine 639. A beta-propeller 3 region spans residues 643 to 902 (EAFLVFTSRA…VFHSSRQDGL (260 aa)). 5 LDL-receptor class B repeats span residues 686-728 (NHIY…DWMG), 729-771 (KNLY…DPTK), 772-814 (GYIY…DYAD), 815-854 (QRLY…TQYS), and 855-897 (DYIY…FHSS). N-linked (GlcNAc...) asparagine glycosylation occurs at asparagine 704. Asparagine 877 is a glycosylation site (N-linked (GlcNAc...) asparagine). The EGF-like 3 domain occupies 901–941 (GLNDCVHSNGQCGQLCLAIPGGHRCGCASHYTLDPSSRNCS). Cystine bridges form between cysteine 905–cysteine 916, cysteine 912–cysteine 925, and cysteine 927–cysteine 940. The tract at residues 944–1211 (STFLLFSQKF…AVEEVSLEEF (268 aa)) is beta-propeller 4. LDL-receptor class B repeat units lie at residues 988–1034 (KFIY…DIYS), 1035–1077 (RTLF…NAER), 1078–1122 (GYMY…DNAL), 1123–1164 (GKLF…VLGR), and 1165–1206 (HLYW…VEEV). Positions 1002–1025 (AKDDGTQPSMLTSPSQSLSPDRQP) are disordered. Polar residues predominate over residues 1007–1021 (TQPSMLTSPSQSLSP). The 42-residue stretch at 1212 to 1253 (SAHPCARDNGGCSHICIAKGDGTPRCSCPVHLVLLQNLLTCG) folds into the EGF-like 4 domain. Disulfide bonds link cysteine 1216-cysteine 1227, cysteine 1223-cysteine 1237, cysteine 1239-cysteine 1252, cysteine 1258-cysteine 1272, cysteine 1265-cysteine 1285, cysteine 1279-cysteine 1294, cysteine 1297-cysteine 1309, cysteine 1304-cysteine 1322, cysteine 1316-cysteine 1331, cysteine 1335-cysteine 1347, cysteine 1342-cysteine 1360, and cysteine 1354-cysteine 1369. LDL-receptor class A domains follow at residues 1257–1295 (TCSP…EGCP), 1296–1332 (VCSA…ANCD), and 1334–1370 (VCLP…LMCE). The helical transmembrane segment at 1384–1406 (SAIGPVIGIILSLFVMGGVYFVC) threads the bilayer. Residues 1407-1614 (QRVMCQRYTG…PPPSPCTDSS (208 aa)) are Cytoplasmic-facing. A disordered region spans residues 1474–1498 (RNHVTGASSSSSSSTKATLYPPILN). Residues 1499-1505 (PPPSPAT) carry the PPPSP motif A motif. A PPPSP motif B motif is present at residues 1537-1544 (PPTTPCST). Residues 1567-1599 (SDSDPYPPPPTPHSQYLSAEDSCPPSPGTERSY) form a disordered region. The short motif at 1573-1580 (PPPPTPHS) is the PPPSP motif C element. The PPPSP motif D signature appears at 1590–1595 (PPSPGT). Positions 1604-1611 (PPPPSPCT) match the PPPSP motif E motif.

Belongs to the LDLR family. Homodimer; disulfide-linked. Forms phosphorylated oligomer aggregates on Wnt-signaling. Component of a WNT-signaling complex that contains a WNT protein, a FZD protein and LRP5 or LRP6. Interacts with FZD8; the interaction is formed on WNT-binding and signaling. Interacts (via the phosphorylated PPPSP motif domains) with AXIN1; the interaction prevents inhibition of beta-catenin phosphorylation and signaling and is enhanced in the presence of GSK3B and WNT1 or WNT3A. Interacts (via beta-propeller regions 3 and 4) with DKK1; the interaction, enhanced by MESD and/or KREMEN, inhibits beta-catenin signaling by preventing GSK3-mediated phosphorylation of the PPPSP motifs and subsequent, AXIN1 binding. Interacts with CSNK1E. Interacts with SOST; the interaction antagonizes canonical Wnt signaling. Interacts with APCDD1. Interacts with MESD; the interaction prevents the formation of LRP5 aggregates, targets LRP5 to the plasma membrane and, when complexed with KREMEN2, increases DKK1 binding. Interacts with CAPRIN2. In terms of processing, phosphorylation of cytoplasmic PPPSP motifs regulates the signal transduction of the Wnt signaling pathway through acting as a docking site for AXIN1. As to expression, widely expressed, with the highest expression levels in liver, heart, and lung and the lowest levels in brain and spleen.

The protein localises to the membrane. It localises to the endoplasmic reticulum. Acts as a coreceptor with members of the frizzled family of seven-transmembrane spanning receptors to transduce signal by Wnt proteins. Activates the canonical Wnt signaling pathway that controls cell fate determination and self-renewal during embryonic development and adult tissue regeneration. In particular, may play an important role in the development of the posterior patterning of the epiblast during gastrulation. During bone development, regulates osteoblast proliferation and differentiation thus determining bone mass. Mechanistically, the formation of the signaling complex between Wnt ligand, frizzled receptor and LRP5 coreceptor promotes the recruitment of AXIN1 to LRP5, stabilizing beta-catenin/CTNNB1 and activating TCF/LEF-mediated transcriptional programs. Acts as a coreceptor for non-Wnt proteins, such as norrin/NDP. Binding of norrin/NDP to frizzled 4/FZD4-LRP5 receptor complex triggers beta-catenin/CTNNB1-dependent signaling known to be required for retinal vascular development. Plays a role in controlling postnatal vascular regression in retina via macrophage-induced endothelial cell apoptosis. This Mus musculus (Mouse) protein is Low-density lipoprotein receptor-related protein 5.